The chain runs to 235 residues: MSKNSKAYRAAAEKVDRSNPYTPLQAAKLAKETSSTKQDATVEVAIRLGVDPRKADQMVRGTVNLPHGTGKTARVAVFAVGEKADAAVAAGADIVGSDDLIEKIQGGFLDFDAVIATPDQMAKVGRIARVLGPRGLMPNPKTGTVTPDVAKAVADIKGGKINFRVDKQANLHFVIGKASFEENKLAENYGAAIDEVLRLKPSASKGRYLKKITVSTTTGPGIPVDPSVTRNFTEA.

The segment at 1–22 (MSKNSKAYRAAAEKVDRSNPYT) is disordered.

Belongs to the universal ribosomal protein uL1 family. In terms of assembly, part of the 50S ribosomal subunit.

Binds directly to 23S rRNA. The L1 stalk is quite mobile in the ribosome, and is involved in E site tRNA release. Its function is as follows. Protein L1 is also a translational repressor protein, it controls the translation of the L11 operon by binding to its mRNA. In Mycobacterium ulcerans (strain Agy99), this protein is Large ribosomal subunit protein uL1.